The primary structure comprises 365 residues: MHNESPIKRRKSTRIYVGNVPIGDGAPIAVQSMTNTRTTDVEATVRQIQSLERVGVDIVRVSVPTMDAAEAFKLIKQRVNVPLVADIHFDYRIAMKVAEYGVDCLRINPGNIGSEERIRQVVDSARHHNIPIRIGVNGGSLEKDIQEKYGEPTPEALVESAMRHVDILDRLNFDQFKVSVKASDVFLAVGSYRLLAQKIDQPLHLGITEAGGARSGSVKSAIGLGMLLAEGIGDTLRISLAADPVEEVKVGFDILKSLRIRSRGINFIACPTCSRQEFDVIGTVNALEQRLEDIITPMDVSIIGCVVNGPGEAEVSTLGVAGAKTKSGFYEDGVRKKERFDNDNIIDQLEAKIRAKAAMLDEITV.

The [4Fe-4S] cluster site is built by Cys-270, Cys-273, Cys-305, and Glu-312.

This sequence belongs to the IspG family. The cofactor is [4Fe-4S] cluster.

It carries out the reaction (2E)-4-hydroxy-3-methylbut-2-enyl diphosphate + 2 oxidized [2Fe-2S]-[ferredoxin] + H2O = 2-C-methyl-D-erythritol 2,4-cyclic diphosphate + 2 reduced [2Fe-2S]-[ferredoxin] + H(+). It catalyses the reaction (2E)-4-hydroxy-3-methylbut-2-enyl diphosphate + oxidized [flavodoxin] + H2O + 2 H(+) = 2-C-methyl-D-erythritol 2,4-cyclic diphosphate + reduced [flavodoxin]. The protein operates within isoprenoid biosynthesis; isopentenyl diphosphate biosynthesis via DXP pathway; isopentenyl diphosphate from 1-deoxy-D-xylulose 5-phosphate: step 5/6. Functionally, converts 2C-methyl-D-erythritol 2,4-cyclodiphosphate (ME-2,4cPP) into 1-hydroxy-2-methyl-2-(E)-butenyl 4-diphosphate. Involved in density-dependent regulation of 2'-N-acetyltransferase. This Providencia stuartii protein is 4-hydroxy-3-methylbut-2-en-1-yl diphosphate synthase (flavodoxin).